The primary structure comprises 98 residues: DNA-directed RNA polymerase subunit omega (98 aa).

Belongs to the RNA polymerase subunit omega family. In terms of assembly, the RNAP catalytic core consists of 2 alpha, 1 beta, 1 beta' and 1 omega subunit. When a sigma factor is associated with the core the holoenzyme is formed, which can initiate transcription.

The enzyme catalyses RNA(n) + a ribonucleoside 5'-triphosphate = RNA(n+1) + diphosphate. Its function is as follows. Promotes RNA polymerase assembly. Latches the N- and C-terminal regions of the beta' subunit thereby facilitating its interaction with the beta and alpha subunits. The protein is DNA-directed RNA polymerase subunit omega of Xylella fastidiosa (strain M12).